A 421-amino-acid chain; its full sequence is Proton/sodium-glutamate symport protein (421 aa).

At 1–3 (MRK) the chain is on the cytoplasmic side. A helical membrane pass occupies residues 4-24 (IGLAWQIFIGLILGIIVGAIF). The Extracellular segment spans residues 25–43 (YGNPKVAAYLQPIGDIFLR). A helical membrane pass occupies residues 44–64 (LIKMIVIPIVISSLVVGVASV). Over 65–77 (GDLKKLGKLGGKT) the chain is Cytoplasmic. A helical membrane pass occupies residues 78–98 (IIYFEIITTIAIVVGLLAANI). Topologically, residues 99 to 148 (FQPGAGVNMKSLEKTDIQSYVDTTNEVQHHSMVETFVNIVPKNIFESLST) are extracellular. A helical transmembrane segment spans residues 149–169 (GDMLPIIFFSVMFGLGVAAIG). The Cytoplasmic portion of the chain corresponds to 170–198 (EKGKPVLQFFQGTAEAMFYVTNQIMKFAP). A helical transmembrane segment spans residues 199–219 (FGVFALIGVTVSKFGVESLIP). Residues 220–222 (LSK) lie on the Extracellular side of the membrane. Residues 223-243 (LVIVVYATMLFFIFAVLGGVA) traverse the membrane as a helical segment. A topological domain (cytoplasmic) is located at residue Lys-244. The helical transmembrane segment at 245–265 (LFGINIFHIIKILKDELILAY) threads the bilayer. Topologically, residues 266–306 (STASSETVLPRIMDKMEKFGCPKAITSFVIPTGYSFNLDGS) are extracellular. A helical transmembrane segment spans residues 307–327 (TLYQALAAIFIAQLYGIDMSV). Over 328 to 330 (SQQ) the chain is Cytoplasmic. 2 consecutive transmembrane segments (helical) span residues 331-351 (ISLLLVLMVTSKGIAGVPGVS) and 352-372 (FVVLLATLGTVGIPVEGLAFI). Topologically, residues 373–421 (AGIDRILDMARTAVNVIGNSLAAIIMSKWEGQYNEEKGKQYLAELQQSA) are cytoplasmic.

This sequence belongs to the dicarboxylate/amino acid:cation symporter (DAACS) (TC 2.A.23) family. As to quaternary structure, homotrimer.

It localises to the cell membrane. Its function is as follows. This carrier protein is part of the Na(+)-dependent, binding-protein-independent glutamate-aspartate transport system. This is Proton/sodium-glutamate symport protein (gltT) from Bacillus caldotenax.